The primary structure comprises 406 residues: Tryptophan 2,3-dioxygenase (406 aa).

Substrate-binding positions include 72-76 (FIVTH) and arginine 144. Residue histidine 328 coordinates heme. Substrate is bound at residue threonine 342.

This sequence belongs to the tryptophan 2,3-dioxygenase family. Homotetramer. Dimer of dimers. The cofactor is heme.

The catalysed reaction is L-tryptophan + O2 = N-formyl-L-kynurenine. It participates in amino-acid degradation; L-tryptophan degradation via kynurenine pathway; L-kynurenine from L-tryptophan: step 1/2. Its function is as follows. Heme-dependent dioxygenase that catalyzes the oxidative cleavage of the L-tryptophan (L-Trp) pyrrole ring and converts L-tryptophan to N-formyl-L-kynurenine. Catalyzes the oxidative cleavage of the indole moiety. This Xenopus laevis (African clawed frog) protein is Tryptophan 2,3-dioxygenase.